Reading from the N-terminus, the 114-residue chain is T cell receptor beta variable 6-5 (114 aa).

The first 21 residues, methionine 1–alanine 21, serve as a signal peptide directing secretion. In terms of domain architecture, Ig-like spans glycine 22–tyrosine 114. Cysteines 42 and 110 form a disulfide. The N-linked (GlcNAc...) asparagine glycan is linked to asparagine 84.

In terms of assembly, alpha-beta TR is a heterodimer composed of an alpha and beta chain; disulfide-linked. The alpha-beta TR is associated with the transmembrane signaling CD3 coreceptor proteins to form the TR-CD3 (TcR or TCR). The assembly of alpha-beta TR heterodimers with CD3 occurs in the endoplasmic reticulum where a single alpha-beta TR heterodimer associates with one CD3D-CD3E heterodimer, one CD3G-CD3E heterodimer and one CD247 homodimer forming a stable octameric structure. CD3D-CD3E and CD3G-CD3E heterodimers preferentially associate with TR alpha and TR beta chains, respectively. The association of the CD247 homodimer is the last step of TcR assembly in the endoplasmic reticulum and is required for transport to the cell surface.

It is found in the cell membrane. Functionally, v region of the variable domain of T cell receptor (TR) beta chain that participates in the antigen recognition. Alpha-beta T cell receptors are antigen specific receptors which are essential to the immune response and are present on the cell surface of T lymphocytes. Recognize peptide-major histocompatibility (MH) (pMH) complexes that are displayed by antigen presenting cells (APC), a prerequisite for efficient T cell adaptive immunity against pathogens. Binding of alpha-beta TR to pMH complex initiates TR-CD3 clustering on the cell surface and intracellular activation of LCK that phosphorylates the ITAM motifs of CD3G, CD3D, CD3E and CD247 enabling the recruitment of ZAP70. In turn ZAP70 phosphorylates LAT, which recruits numerous signaling molecules to form the LAT signalosome. The LAT signalosome propagates signal branching to three major signaling pathways, the calcium, the mitogen-activated protein kinase (MAPK) kinase and the nuclear factor NF-kappa-B (NF-kB) pathways, leading to the mobilization of transcription factors that are critical for gene expression and essential for T cell growth and differentiation. The T cell repertoire is generated in the thymus, by V-(D)-J rearrangement. This repertoire is then shaped by intrathymic selection events to generate a peripheral T cell pool of self-MH restricted, non-autoaggressive T cells. Post-thymic interaction of alpha-beta TR with the pMH complexes shapes TR structural and functional avidity. The sequence is that of T cell receptor beta variable 6-5 from Homo sapiens (Human).